Here is a 736-residue protein sequence, read N- to C-terminus: Prolyl 3-hydroxylase 1 (736 aa).

The first 22 residues, 1-22 (MAVRALKLLTTLLAVVAAASQA), serve as a signal peptide directing secretion. TPR repeat units follow at residues 35 to 68 (PDLL…RAAL), 143 to 176 (RSPY…NPEH), 205 to 238 (HMQE…YFVA), and 301 to 334 (PSHY…FPND). Asn316 is a glycosylation site (N-linked (GlcNAc...) asparagine). A coiled-coil region spans residues 401-439 (KRLQEKQKSERETAVRISQEIGNLMKEIETLVEEKTKES). Residues Asn467 and Asn540 are each glycosylated (N-linked (GlcNAc...) asparagine). The Fe2OG dioxygenase domain maps to 564–678 (SHLVCRTAIE…RCAIALWFTL (115 aa)). The Fe cation site is built by His587, Asp589, and His659. Arg669 is a catalytic residue. The disordered stretch occupies residues 699 to 736 (SPEEMDLSQEQPLDAQQGPPEPAQESLSGSESKPKDEL). The Prevents secretion from ER motif lies at 733 to 736 (KDEL).

Belongs to the leprecan family. Requires Fe cation as cofactor. The cofactor is L-ascorbate. O-glycosylated; chondroitin sulfate.

Its subcellular location is the endoplasmic reticulum. The protein resides in the secreted. The protein localises to the extracellular space. It localises to the extracellular matrix. It carries out the reaction L-prolyl-[collagen] + 2-oxoglutarate + O2 = trans-3-hydroxy-L-prolyl-[collagen] + succinate + CO2. Functionally, basement membrane-associated chondroitin sulfate proteoglycan (CSPG). Has prolyl 3-hydroxylase activity catalyzing the post-translational formation of 3-hydroxyproline in -Xaa-Pro-Gly- sequences in collagens, especially types IV and V. May be involved in the secretory pathway of cells. Has growth suppressive activity in fibroblasts. This is Prolyl 3-hydroxylase 1 from Homo sapiens (Human).